Reading from the N-terminus, the 723-residue chain is Bifunctional lysine-specific demethylase and histidyl-hydroxylase NO66 (723 aa).

2 disordered regions span residues 13-34 (KKTA…QKAA) and 48-213 (SAVK…APSC). The span at 14-31 (KTAKKPAKKTTKQNRQKQ) shows a compositional bias: basic residues. Residues 49 to 72 (AVKQNNGAKGKAKANGVKGNAKAQ) are compositionally biased toward low complexity. Composition is skewed to acidic residues over residues 88 to 106 (ESVD…EDNE) and 114 to 129 (EDDY…EFEE). The span at 133-155 (NSPSGSCSCSASSGSSNTENSPP) shows a compositional bias: low complexity. The segment covering 190–199 (EQKEGKELSK) has biased composition (basic and acidic residues). The segment covering 204 to 213 (KSAPAAAPSC) has biased composition (low complexity). Positions 379–518 (NPSTYLKGLR…NLMEALMPAV (140 aa)) constitute a JmjC domain. Fe cation contacts are provided by histidine 419, aspartate 421, and histidine 484.

It belongs to the ROX family. NO66 subfamily. The cofactor is Fe(2+).

Its subcellular location is the nucleus. It carries out the reaction N(6),N(6)-dimethyl-L-lysyl(36)-[histone H3] + 2 2-oxoglutarate + 2 O2 = L-lysyl(36)-[histone H3] + 2 formaldehyde + 2 succinate + 2 CO2. Functionally, oxygenase that can act as both a histone lysine demethylase and a ribosomal histidine hydroxylase. Specifically demethylates 'Lys-4' (H3K4me) and 'Lys-36' (H3K36me) of histone H3, thereby playing a central role in histone code. The protein is Bifunctional lysine-specific demethylase and histidyl-hydroxylase NO66 of Drosophila grimshawi (Hawaiian fruit fly).